We begin with the raw amino-acid sequence, 374 residues long: P2Y purinoceptor 2 (374 aa).

Residues 1–32 (MAAGLDSWNSTINGTWEGDELGYKCRFNEDFK) lie on the Extracellular side of the membrane. 2 N-linked (GlcNAc...) asparagine glycosylation sites follow: N9 and N13. The chain crosses the membrane as a helical span at residues 33–59 (YVLLPVSYGVVCVLGLCLNVVALYIFL). Topologically, residues 60-70 (CRLKTWNASTT) are cytoplasmic. The chain crosses the membrane as a helical span at residues 71–93 (YMFHLAVSDSLYAASLPLLVYYY). The Extracellular segment spans residues 94-110 (AQGDHWPFSTVLCKLVR). The cysteines at positions 106 and 183 are disulfide-linked. Residues 111 to 129 (FLFYTNLYCSILFLTCISV) form a helical membrane-spanning segment. At 130–152 (HRCLGVLRPLHSLSWGHARYARR) the chain is on the cytoplasmic side. A helical transmembrane segment spans residues 153-172 (VAAVVWVLVLACQAPVLYFV). Topologically, residues 173–194 (TTSVRGTRITCHDTSARELFSH) are extracellular. A helical transmembrane segment spans residues 195-220 (FVAYSSVMLGLLFAVPFSIILVCYVL). Over 221 to 245 (MARRLLKPAYGTTGLPRAKRKSVRT) the chain is Cytoplasmic. The helical transmembrane segment at 246–268 (IALVLAVFALCFLPFHVTRTLYY) threads the bilayer. The Extracellular portion of the chain corresponds to 269–286 (SFRSLDLSCHTLNAINMA). Residues 287 to 308 (YKITRPLASANSCLDPVLYFLA) form a helical membrane-spanning segment. Over 309–374 (GQRLVRFARD…AGSETKDIRL (66 aa)) the chain is Cytoplasmic. The segment at 318 to 374 (DAKPATEPTPSPQARRKLGLHRPNRTDTVRKDLSISSDDSRRTESTPAGSETKDIRL) is disordered. Over residues 331–340 (ARRKLGLHRP) the composition is skewed to basic residues. The segment covering 341–361 (NRTDTVRKDLSISSDDSRRTE) has biased composition (basic and acidic residues).

It belongs to the G-protein coupled receptor 1 family.

The protein resides in the cell membrane. In terms of biological role, receptor for ATP and UTP coupled to G-proteins that activate a phosphatidylinositol-calcium second messenger system. The affinity range is UTP = ATP &gt; ATP-gamma-S &gt;&gt; 2-methylthio-ATP = ADP. The sequence is that of P2Y purinoceptor 2 (P2ry2) from Rattus norvegicus (Rat).